Consider the following 77-residue polypeptide: Acyl carrier protein (77 aa).

In terms of domain architecture, Carrier spans 1–76 (MATFDDVKAV…DVVNYIDNLK (76 aa)). Residue Ser-36 is modified to O-(pantetheine 4'-phosphoryl)serine.

Belongs to the acyl carrier protein (ACP) family. Post-translationally, 4'-phosphopantetheine is transferred from CoA to a specific serine of apo-ACP by AcpS. This modification is essential for activity because fatty acids are bound in thioester linkage to the sulfhydryl of the prosthetic group.

It is found in the cytoplasm. It functions in the pathway lipid metabolism; fatty acid biosynthesis. In terms of biological role, carrier of the growing fatty acid chain in fatty acid biosynthesis. The polypeptide is Acyl carrier protein (Campylobacter jejuni subsp. jejuni serotype O:6 (strain 81116 / NCTC 11828)).